We begin with the raw amino-acid sequence, 170 residues long: Thialysine N-epsilon-acetyltransferase (170 aa).

Residues 4–166 (TRIREARESD…FRFEGEAMRE (163 aa)) enclose the N-acetyltransferase domain. 27–28 (FE) is a binding site for substrate. At Lys-29 the chain carries N6-acetyllysine. Position 92 (Glu-92) interacts with substrate. Acetyl-CoA contacts are provided by residues 94 to 96 (IYV), 102 to 107 (GQGIGT), 133 to 135 (NKK), and Tyr-140. Tyr-140 functions as the Proton donor in the catalytic mechanism. Glu-152 provides a ligand contact to substrate.

Belongs to the acetyltransferase family. As to quaternary structure, homodimer.

The protein localises to the cytoplasm. It carries out the reaction S-(2-aminoethyl)-L-cysteine + acetyl-CoA = S-(2-acetamidoethyl)-L-cysteine + CoA + H(+). The enzyme catalyses an alkane-alpha,omega-diamine + acetyl-CoA = an N-acetylalkane-alpha,omega-diamine + CoA + H(+). In terms of biological role, catalyzes the N-acetylation of the amino acid thialysine (S-(2-aminoethyl)-L-cysteine), a L-lysine analog with the 4-methylene group substituted with a sulfur. May also catalyze acetylation of polyamines, such as norspermidine, spermidine or spermine. However, ability to acetylate polyamines is weak, suggesting that it does not act as a diamine acetyltransferase in vivo. This chain is Thialysine N-epsilon-acetyltransferase, found in Mus musculus (Mouse).